A 227-amino-acid polypeptide reads, in one-letter code: MMNIILKISGKFFDEDNVDNLIVLRQSIKELADNGFRVGIVTGGGSTARRYIKLAREIGIGEAYLDLLGIWASRLNAYLVMFSLQDLAYMHVPQSLEEFIQDWSHGKVVVTGGFQPGQSTAAVAALVAEASSSKTLVVATNVDGVYEKDPRIYADVKLIPHLTTQDLRKILEGSQSVQAGTYELLDPLAIKIVERSKIRVIVMNYRKLNRIIDILKGEEVSSIIEPV.

Lys-7–Lys-11 contacts ATP. A UMP-binding site is contributed by Gly-44. Residues Gly-45 and Arg-49 each contribute to the ATP site. UMP-binding positions include Asp-66 and Phe-114 to Thr-120. Thr-140, Asn-141, Tyr-146, and Asp-149 together coordinate ATP.

This sequence belongs to the UMP kinase family. Homohexamer.

It localises to the cytoplasm. It carries out the reaction UMP + ATP = UDP + ADP. It participates in pyrimidine metabolism; CTP biosynthesis via de novo pathway; UDP from UMP (UMPK route): step 1/1. Unlike most bacteria, is not activated by GTP. UTP acts as a competitive inhibitor against both substrates. High concentration of UMP abolishes the inhibition of UTP at low ATP concentrations, indicating that UTP binds to the acceptor site (UMP site). Functionally, catalyzes the reversible phosphorylation of UMP to UDP, with ATP as the most efficient phosphate donor. Is also able to phosphorylate dUMP, although much less efficiently. In Saccharolobus solfataricus (strain ATCC 35092 / DSM 1617 / JCM 11322 / P2) (Sulfolobus solfataricus), this protein is Uridylate kinase (pyrH).